The primary structure comprises 844 residues: DNA mismatch repair protein MutS (844 aa).

610–617 (GPNMGGKS) contacts ATP.

It belongs to the DNA mismatch repair MutS family.

Its function is as follows. This protein is involved in the repair of mismatches in DNA. It is possible that it carries out the mismatch recognition step. This protein has a weak ATPase activity. The chain is DNA mismatch repair protein MutS from Francisella tularensis subsp. mediasiatica (strain FSC147).